The chain runs to 356 residues: Glutamine synthetase cytosolic isozyme 1-4 (356 aa).

Serine 2 carries the N-acetylserine modification. Residues serine 2 and serine 48 each carry the phosphoserine modification. A GS beta-grasp domain is found at 19 to 99 (IIAEYIWIGG…VMCDAYTPAG (81 aa)). Positions 37 to 66 (ARTLPGPVTDPSQLPKWNYDGSSTGQAPGD) are disordered. Residues 106–356 (KRHAAAKIFE…IAESTILWKP (251 aa)) form the GS catalytic domain.

This sequence belongs to the glutamine synthetase family. Homooctamer. Interacts with GRF3. In terms of tissue distribution, expressed in the pericycle in the region of lateral root emergence.

It localises to the cytoplasm. It catalyses the reaction L-glutamate + NH4(+) + ATP = L-glutamine + ADP + phosphate + H(+). Its function is as follows. High-affinity glutamine synthetase. May contribute to the homeostatic control of glutamine synthesis in roots. The protein is Glutamine synthetase cytosolic isozyme 1-4 of Arabidopsis thaliana (Mouse-ear cress).